A 201-amino-acid chain; its full sequence is Large ribosomal subunit protein uL4 (201 aa).

A disordered region spans residues 46–71 (QKTRAEITGTGKKPWRQKGTGRARAG).

This sequence belongs to the universal ribosomal protein uL4 family. In terms of assembly, part of the 50S ribosomal subunit.

Functionally, one of the primary rRNA binding proteins, this protein initially binds near the 5'-end of the 23S rRNA. It is important during the early stages of 50S assembly. It makes multiple contacts with different domains of the 23S rRNA in the assembled 50S subunit and ribosome. Forms part of the polypeptide exit tunnel. This is Large ribosomal subunit protein uL4 from Shewanella amazonensis (strain ATCC BAA-1098 / SB2B).